The chain runs to 782 residues: MATYKVQIPASFKTSYSFAESLKVSIAISAFSVKVPCEGAANCNSVRLVNSKEPEKYVSDANAIVSFLYWKQEEDLFNSFISSKLSILDWEALQFTPKAYTAKTKEDFAYLLSQLETIFKENEILNEFTPVEVALASDIYFCVLNGAPVREYPLLSAWYLKIEKQKPFVQALKLTFEKTLGQPAVTSTEKIPVSETTRNVNSQHLMRERVPGEKILPKSNERNILITSALPYVNNVPHLGNIVGSTLSADVFARYHRARNHNTLYICGTDEYGTATETKALEEGVSPKELCDKYHALHKEVYDWFEIDFDHFGRTTTPKQTGIAQHIFTKLYNNDYMAIDTMTQLYCEVHQGYLADRYVEGTCPKCGYDDARGDQCDGCGGLLNAFELIDPKCKLDRATPVKRETKHVFLSLDKLQPAVESWAMQSAVEGKWSNNGRSITESWLKEGLRPRCITRDLKWGTPVPLEEFKGKVLYVWFDATIGYISITANYTDEWEKWWRNPEQVKLYQFMGKDNVPFHTVIFPSSLLGTGEKWTMLHHINTTDYLNYETGKFSKSRGVGVFGNTAQDIGLSPSVWRYYLLSSRPETSDTMFTWKEFITRHNSELLANLGNFVNRTLKFTTAKYNGLVPHYLTDPSVGAGKLKADFVKDVNALLAKYNAALEASKLREGLRLAMEISARGNQYLQDNRIDNKCYLYERQKCADAIGYALNLIYLLAAIFYPYMPSTSTSIYKQLNAPAAAIPDTWELCLLPGHRIGEPEYLFTRIDESMEEEWRSKYGGNGSN.

Residues 231–241 carry the 'HIGH' region motif; it reads PYVNNVPHLGN. The 'KMSKS' region motif lies at 551–555; that stretch reads KFSKS.

The protein belongs to the class-I aminoacyl-tRNA synthetase family.

It localises to the cytoplasm. The catalysed reaction is tRNA(Met) + L-methionine + ATP = L-methionyl-tRNA(Met) + AMP + diphosphate. The sequence is that of Probable methionine--tRNA ligase, cytoplasmic (rar1) from Schizosaccharomyces pombe (strain 972 / ATCC 24843) (Fission yeast).